The following is a 572-amino-acid chain: MFKHTLGAAALSLLFNSNAVQASPVPETSPATGHLFKRVAQISPQYPMFTVPLPIPPVKQPRLTVTNPVNGQEIWYYEVEIKPFTHQVYPDLGSADLVGYDGMSPGPTFQVPRGVETVVRFINNAEAPNSVHLHGSFSRAAFDGWAEDITEPGSFKDYYYPNRQSARTLWYHDHAMHITAENAYRGQAGLYMLTDPAEDALNLPSGYGEFDIPMILTSKQYTANGNLVTTNGELNSFWGDVIHVNGQPWPFKNVEPRKYRFRFLDAAVSRSFGLYFADTDAIDTRLPFKVIASDSGLLEHPADTSLLYISMAERYEVVFDFSDYAGKTIELRNLGGSIGGIGTDTDYDNTDKVMRFVVADDTTQPDTSVVPANLRDVPFPSPTTNTPRQFRFGRTGPTWTINGVAFADVQNRLLANVPVGTVERWELINAGNGWTHPIHIHLVDFKVISRTSGNNARTVMPYESGLKDVVWLGRRETVVVEAHYAPFPGVYMFHCHNLIHEDHDMMAAFNATVLPDYGYNATVFVDPMEELWQARPYELGEFQAQSGQFSVQAVTERIQTMAEYRPYAAADE.

The signal sequence occupies residues 1–19 (MFKHTLGAAALSLLFNSNA). Residues 20–38 (VQASPVPETSPATGHLFKR) constitute a propeptide that is removed on maturation. Plastocyanin-like domains are found at residues 98 to 194 (VGYD…YMLT) and 404 to 526 (VAFA…VFVD). Residues His132, His134, His172, His174, His436, His439, His441, His494, Cys495, His496, His500, and Met505 each contribute to the Cu cation site. N-linked (GlcNAc...) asparagine glycosylation is found at Asn510 and Asn520.

It belongs to the multicopper oxidase family. Requires Cu cation as cofactor.

The catalysed reaction is 2 (4Z,15Z)-bilirubin IXalpha + O2 = 2 biliverdin IXalpha + 2 H2O. Its function is as follows. Oxidation of bilirubin and other tetrapyrroles. The chain is Bilirubin oxidase from Albifimbria verrucaria (Myrothecium leaf spot and pod blight fungus).